Consider the following 186-residue polypeptide: CASP-like protein ARALYDRAFT_316979 (186 aa).

The Cytoplasmic segment spans residues 1-23 (MRRNGDGEEVVAKRRRRIKELVQ). Residues 24-44 (VALRGGCLAASATAMAVMLTA) form a helical membrane-spanning segment. At 45 to 70 (TEEGVADIYGFKLTLSSNWSFSPSYQ) the chain is on the extracellular side. Asparagine 62 carries an N-linked (GlcNAc...) asparagine glycan. A helical transmembrane segment spans residues 71 to 91 (YVVGACTGTVLYSLFQLCLGV). Over 92-115 (YRLLTGSPITPSRFQAWLCFTSDQ) the chain is Cytoplasmic. Residues 116 to 132 (LFGYLMMSAGSAGSGVT) traverse the membrane as a helical segment. Residues 133–161 (NLNKTGIRHTPLPDFCKTLSSFCNHVALS) lie on the Extracellular side of the membrane. Asparagine 135 carries N-linked (GlcNAc...) asparagine glycosylation. Residues 162–182 (LLLVFLSFIFLASSSFFTVLV) form a helical membrane-spanning segment. At 183-186 (LSTP) the chain is on the cytoplasmic side.

It belongs to the Casparian strip membrane proteins (CASP) family. As to quaternary structure, homodimer and heterodimers.

It is found in the cell membrane. This chain is CASP-like protein ARALYDRAFT_316979, found in Arabidopsis lyrata subsp. lyrata (Lyre-leaved rock-cress).